The chain runs to 411 residues: MSKLPTGVEIRGRYIRIWFMFRGKRCRETLKGWEITNSNIKKAGNLRALIVHEINSGEFEYLRRFPQSSTGAKMVTTRVIKTFGELCDIWTKIKETELTTNTMKKTKSQLKTLRIIICESTPISHIRYSDILNYRNELLHGETLYLDNPRSNKKGRTVRTVDNYIALLCSLLRFAYQSGFISTKPFEGVKKLQRNRIKPDPLSKTEFNALMESEKGQSQNLWKFAVYSGLRHGELAALAWEDVDLEKGIVNVRRNLTILDMFGPPKTNAGIRTVTLLQPALEALKEQYKLTGHHRKSEITFYHREYGRTEKQKLHFVFMPRVCNGKQKPYYSVSSLGARWNAAVKRAGIRRRNPYHTRHTFACWLLTAGANPAFIASQMGHETAQMVYEIYGMWIDDMNDEQIAMLNARLS.

Residues 81–176 (KTFGELCDIW…LLCSLLRFAY (96 aa)) enclose the Core-binding (CB) domain. A Tyr recombinase domain is found at 197–404 (IKPDPLSKTE…IDDMNDEQIA (208 aa)). Catalysis depends on residues Arg231, Lys266, Arg358, and His381. Tyr391 (O-(3'-phospho-DNA)-tyrosine intermediate) is an active-site residue.

The protein belongs to the 'phage' integrase family.

Integrase is necessary for integration of the phage into the host genome by site-specific recombination. In conjunction with excisionase, integrase is also necessary for excision of the prophage from the host genome. The chain is Prophage integrase IntR (intR) from Escherichia coli (strain K12).